Here is an 842-residue protein sequence, read N- to C-terminus: Glycogen phosphorylase, muscle form (842 aa).

The residue at position 2 (Ser-2) is an N-acetylserine. The residue at position 15 (Ser-15) is a Phosphoserine; by PHK; in form phosphorylase A. The residue at position 26 (Ser-26) is a Phosphoserine. 2 residues coordinate AMP: Asp-43 and Tyr-76. Phosphotyrosine occurs at positions 204 and 227. 310-319 (RRFKSSKFGC) is an AMP binding site. Ser-430 carries the post-translational modification Phosphoserine. The residue at position 473 (Tyr-473) is a Phosphotyrosine. Ser-514 is subject to Phosphoserine. An N6-(pyridoxal phosphate)lysine modification is found at Lys-681. Ser-747 and Ser-748 each carry phosphoserine.

It belongs to the glycogen phosphorylase family. As to quaternary structure, homodimer. Homotetramer; to form the enzymatically active phosphorylase A. It depends on pyridoxal 5'-phosphate as a cofactor. In terms of processing, phosphorylation of Ser-15 converts phosphorylase B (unphosphorylated) to phosphorylase A.

It catalyses the reaction [(1-&gt;4)-alpha-D-glucosyl](n) + phosphate = [(1-&gt;4)-alpha-D-glucosyl](n-1) + alpha-D-glucose 1-phosphate. With respect to regulation, allosterically regulated through the non-covalent binding of metabolites, being activated by AMP and inhibited by ATP, ADP, and glucose-6-phosphate. The activity is also controlled by post-translational modifications including phosphorylation. Its function is as follows. Allosteric enzyme that catalyzes the rate-limiting step in glycogen catabolism, the phosphorolytic cleavage of glycogen to produce glucose-1-phosphate, and plays a central role in maintaining cellular and organismal glucose homeostasis. The protein is Glycogen phosphorylase, muscle form of Rattus norvegicus (Rat).